Consider the following 205-residue polypeptide: Proteasome subunit beta (205 aa).

The propeptide at 1–8 (MDDKQYKG) is removed in mature form; by autocatalysis. The Nucleophile role is filled by threonine 9.

Belongs to the peptidase T1B family. As to quaternary structure, the 20S proteasome core is composed of 14 alpha and 14 beta subunits that assemble into four stacked heptameric rings, resulting in a barrel-shaped structure. The two inner rings, each composed of seven catalytic beta subunits, are sandwiched by two outer rings, each composed of seven alpha subunits. The catalytic chamber with the active sites is on the inside of the barrel. Has a gated structure, the ends of the cylinder being occluded by the N-termini of the alpha-subunits. Is capped at one or both ends by the proteasome regulatory ATPase, PAN.

The protein localises to the cytoplasm. It carries out the reaction Cleavage of peptide bonds with very broad specificity.. With respect to regulation, the formation of the proteasomal ATPase PAN-20S proteasome complex, via the docking of the C-termini of PAN into the intersubunit pockets in the alpha-rings, triggers opening of the gate for substrate entry. Interconversion between the open-gate and close-gate conformations leads to a dynamic regulation of the 20S proteasome proteolysis activity. In terms of biological role, component of the proteasome core, a large protease complex with broad specificity involved in protein degradation. The polypeptide is Proteasome subunit beta (Methanocella paludicola (strain DSM 17711 / JCM 13418 / NBRC 101707 / SANAE)).